The chain runs to 257 residues: MPASMFSIDNILAARPRCKDSVLPVAPSAAAPVVFPALHGDSLYGASGGASSDYGAFYPRPVAPGGAGLPAAVSGSRLGYNNYFYGQLHVQAAPVGPACCGAVPPLGAQQCSCVPAPSGYEGPGSVLVSPVPHQMLPYMNVGTLSRTELQLLNQLHCRRKRRHRTIFTDEQLEALENLFQETKYPDVGTREQLARKVHLREEKVEVWFKNRRAKWRRQKRSSSEESENAEKWNKTSSSKASPEKREEEGKSDLDSDS.

Positions 160–219 form a DNA-binding region, homeobox; it reads KRRHRTIFTDEQLEALENLFQETKYPDVGTREQLARKVHLREEKVEVWFKNRRAKWRRQK. Residues 213 to 257 are disordered; that stretch reads AKWRRQKRSSSEESENAEKWNKTSSSKASPEKREEEGKSDLDSDS. A compositionally biased stretch (basic and acidic residues) spans 241 to 257; the sequence is SPEKREEEGKSDLDSDS.

Belongs to the paired homeobox family. Bicoid subfamily.

It localises to the nucleus. Functionally, regulates chordin (CHRD). May play a role in spatial programing within discrete embryonic fields or lineage compartments during organogenesis. In concert with NKX3-2, plays a role in defining the structural components of the middle ear; required for the development of the entire tympanic ring. Probably involved in the regulatory networks that define neural crest cell fate specification and determine mesoderm cell lineages in mammals. This chain is Homeobox protein goosecoid (GSC), found in Pongo pygmaeus (Bornean orangutan).